Consider the following 152-residue polypeptide: MDLDSPLFNTLHHIMDLTDDTTEKNLNAPTRTYVRDAKAMAATPADVKEHPNSYVFMVDMPGVKSGDIKVQVEDENVLLISGERKREEEKEGVKYLKMERRIGKLMRKFVLPENANIEAISAISQDGVLTVTVNKLPPPEPKKPKTIQVKVA.

The sHSP domain maps to 36–152; the sequence is DAKAMAATPA…KPKTIQVKVA (117 aa).

Belongs to the small heat shock protein (HSP20) family.

The protein resides in the cytoplasm. In Pisum sativum (Garden pea), this protein is 17.1 kDa class II heat shock protein (HSP17.7).